We begin with the raw amino-acid sequence, 201 residues long: GTP-binding protein ryh1 (201 aa).

Residue 18–25 (GEQSVGKT) participates in GTP binding. Positions 40 to 48 (YQATIGIDF) match the Effector region motif. GTP is bound by residues 66 to 70 (DTAGQ) and 124 to 127 (NKTD). Residues C199 and C201 are each lipidated (S-geranylgeranyl cysteine). C201 carries the post-translational modification Cysteine methyl ester.

It belongs to the small GTPase superfamily. Rab family.

It is found in the endosome membrane. Its subcellular location is the golgi apparatus membrane. The protein resides in the nucleus. It localises to the cytoplasm. The protein localises to the cytosol. Functionally, has a role in retrograde traffricking of proteins from the endosome to the Golgi. Involved in protein transport to the plasma membrane. Involved in the secretory pathway where it has a role in acid phosphatase secretion. Required also in normal glycosylation trafficking pathways. The polypeptide is GTP-binding protein ryh1 (ryh1) (Schizosaccharomyces pombe (strain 972 / ATCC 24843) (Fission yeast)).